The primary structure comprises 463 residues: NADH dehydrogenase [ubiquinone] iron-sulfur protein 2, mitochondrial (463 aa).

A mitochondrion-targeting transit peptide spans 1-33; that stretch reads MAALRALCGFRGVAAQVLRPGAGVRLPIQPSRG. Lys62 carries the post-translational modification N6-acetyllysine. Arg118 bears the Symmetric dimethylarginine mark. [4Fe-4S] cluster contacts are provided by Cys326, Cys332, and Cys347.

It belongs to the complex I 49 kDa subunit family. In terms of assembly, core subunit of respiratory chain NADH dehydrogenase (Complex I) which is composed of 45 different subunits. Component of the iron-sulfur (IP) fragment of the enzyme. Interacts with NDUFAF3. Interacts with NDUFAF7. Interacts with CERS2. Requires [4Fe-4S] cluster as cofactor. In terms of processing, dimethylation at Arg-118 by NDUFAF7 takes place after NDUFS2 assembles into the complex I, leading to stabilize the early intermediate complex.

Its subcellular location is the mitochondrion inner membrane. It carries out the reaction a ubiquinone + NADH + 5 H(+)(in) = a ubiquinol + NAD(+) + 4 H(+)(out). Its function is as follows. Core subunit of the mitochondrial membrane respiratory chain NADH dehydrogenase (Complex I) which catalyzes electron transfer from NADH through the respiratory chain, using ubiquinone as an electron acceptor. Essential for the catalytic activity of complex I. Essential for the assembly of complex I. Redox-sensitive, critical component of the oxygen-sensing pathway in the pulmonary vasculature which plays a key role in acute pulmonary oxygen-sensing and hypoxic pulmonary vasoconstriction. Plays an important role in carotid body sensing of hypoxia. Essential for glia-like neural stem and progenitor cell proliferation, differentiation and subsequent oligodendrocyte or neuronal maturation. The sequence is that of NADH dehydrogenase [ubiquinone] iron-sulfur protein 2, mitochondrial (NDUFS2) from Homo sapiens (Human).